Here is a 65-residue protein sequence, read N- to C-terminus: pH-response transcription factor pacC/RIM101 (65 aa).

The C2H2-type 1 zinc finger occupies 16–40 (LTCQWNSCRTTTVKRDHITSHIRVH). The C2H2-type 2; degenerate zinc finger occupies 46–65 (HKCEFCGKSFKRPQDLKKHV).

Belongs to the pacC/RIM101 family.

The protein resides in the nucleus. Functionally, transcription factor that mediates regulation of both acid- and alkaline-expressed genes in response to ambient pH. At alkaline ambient pH, activates transcription of alkaline-expressed genes (including pac1 itself) and represses transcription of acid-expressed genes. The protein is pH-response transcription factor pacC/RIM101 (pac1) of Colletotrichum gloeosporioides (Anthracnose fungus).